The sequence spans 34 residues: Trypsin inhibitor (34 aa).

2 disulfide bridges follow: cysteine 7–cysteine 29 and cysteine 11–cysteine 25.

It localises to the secreted. In terms of biological role, inhibits trypsin. This is Trypsin inhibitor from Veronica hederifolia (Ivy-leaved speedwell).